Consider the following 83-residue polypeptide: Small ribosomal subunit protein eS21 (83 aa).

This sequence belongs to the eukaryotic ribosomal protein eS21 family. As to quaternary structure, component of the 40S small ribosomal subunit.

The protein resides in the cytoplasm. It is found in the cytosol. It localises to the rough endoplasmic reticulum. Functionally, component of the small ribosomal subunit. The ribosome is a large ribonucleoprotein complex responsible for the synthesis of proteins in the cell. The chain is Small ribosomal subunit protein eS21 (rps21) from Ictalurus punctatus (Channel catfish).